The chain runs to 620 residues: Lamin-B2 (620 aa).

The disordered stretch occupies residues 1–38; it reads MSPPSPGRRREQRRPRAAATMATPLPGRAGGPATPLSP. A head region spans residues 1 to 48; the sequence is MSPPSPGRRREQRRPRAAATMATPLPGRAGGPATPLSPTRLSRLQEKE. A phosphothreonine mark is found at T23 and T34. The residue at position 37 (S37) is a Phosphoserine. The region spanning 46–402 is the IF rod domain; the sequence is EKEELRELND…KLLEGEEERL (357 aa). Residues 49–83 are coil 1A; sequence ELRELNDRLAHYIDRVRALELENDRLLLKISEKEE. K77 participates in a covalent cross-link: Glycyl lysine isopeptide (Lys-Gly) (interchain with G-Cter in SUMO2). An N6-acetyllysine; alternate modification is found at K81. A Glycyl lysine isopeptide (Lys-Gly) (interchain with G-Cter in SUMO2); alternate cross-link involves residue K81. The tract at residues 84–95 is linker 1; the sequence is VTTREVSGIKAL. The coil 1B stretch occupies residues 96–229; sequence YESELADARR…DFRKSVFEEE (134 aa). Glycyl lysine isopeptide (Lys-Gly) (interchain with G-Cter in SUMO2) cross-links involve residues K195 and K255. A linker 2 region spans residues 230-256; it reads VRETRRRHERRLVEVDSSRQQEYDFKM. Residues 257 to 400 form a coil 2 region; that stretch reads AQALEELRSQ…YRKLLEGEEE (144 aa). Phosphoserine is present on residues S316 and S407. Positions 399 to 464 are disordered; the sequence is EERLKLSPSP…GTGGSGGFHL (66 aa). The interval 401 to 620 is tail; sequence RLKLSPSPSS…RTTSRGCYVM (220 aa). Positions 404–431 are enriched in low complexity; sequence LSPSPSSRVTVSRATSSSSGSLSATGRL. O-linked (GlcNAc) threonine glycosylation is present at T413. Phosphoserine is present on residues S420, S422, S424, and S426. R433 bears the Omega-N-methylarginine mark. The Nuclear localization signal motif lies at 435 to 440; it reads KRKRLE. The segment covering 444 to 453 has biased composition (low complexity); sequence PLGSGPSVLG. In terms of domain architecture, LTD spans 462 to 579; that stretch reads FHLAQQASAS…EEVAMRTVKK (118 aa). Residue K489 forms a Glycyl lysine isopeptide (Lys-Gly) (interchain with G-Cter in SUMO2) linkage. S497 carries the post-translational modification Phosphoserine. The tract at residues 581–620 is disordered; sequence SVMRENENGEEEEEEAEFGEEDLFHQQGDPRTTSRGCYVM. Over residues 588–601 the composition is skewed to acidic residues; the sequence is NGEEEEEEAEFGEE. Over residues 609-620 the composition is skewed to polar residues; sequence DPRTTSRGCYVM. The residue at position 617 (C617) is a Cysteine methyl ester. C617 carries S-farnesyl cysteine lipidation. The propeptide at 618 to 620 is removed in mature form; the sequence is YVM.

The protein belongs to the intermediate filament family. Dimer. Lamin dimers then assemble into dimeric head-to-tail polymers. Ultimately, two head-to-tail polymers assemble laterally into a protofilament with a uniformly shaped rod of 3.5 nm in diameter. Interacts with TMEM43. In terms of processing, B-type lamins undergo a series of modifications, such as farnesylation and phosphorylation. Increased phosphorylation of the lamins occurs before envelope disintegration and probably plays a role in regulating lamin associations. Post-translationally, phosphorylation plays a key role in lamin organization, subcellular localization and nuclear envelope disintegration. Phosphorylation by CDK1 at Ser-37 and Ser-407 at the onset of mitosis drives lamin disassembly and nuclear envelope breakdown.

The protein resides in the nucleus lamina. Functionally, lamins are intermediate filament proteins that assemble into a filamentous meshwork, and which constitute the major components of the nuclear lamina, a fibrous layer on the nucleoplasmic side of the inner nuclear membrane. Lamins provide a framework for the nuclear envelope, bridging the nuclear envelope and chromatin, thereby playing an important role in nuclear assembly, chromatin organization, nuclear membrane and telomere dynamics. The structural integrity of the lamina is strictly controlled by the cell cycle, as seen by the disintegration and formation of the nuclear envelope in prophase and telophase, respectively. In Homo sapiens (Human), this protein is Lamin-B2 (LMNB2).